A 311-amino-acid polypeptide reads, in one-letter code: Porphobilinogen deaminase (311 aa).

Residue cysteine 241 is modified to S-(dipyrrolylmethanemethyl)cysteine.

The protein belongs to the HMBS family. As to quaternary structure, monomer. The cofactor is dipyrromethane.

The enzyme catalyses 4 porphobilinogen + H2O = hydroxymethylbilane + 4 NH4(+). Its pathway is porphyrin-containing compound metabolism; protoporphyrin-IX biosynthesis; coproporphyrinogen-III from 5-aminolevulinate: step 2/4. Functionally, tetrapolymerization of the monopyrrole PBG into the hydroxymethylbilane pre-uroporphyrinogen in several discrete steps. The polypeptide is Porphobilinogen deaminase (Geobacillus sp. (strain WCH70)).